The chain runs to 155 residues: Large ribosomal subunit protein uL13 (155 aa).

Belongs to the universal ribosomal protein uL13 family. In terms of assembly, part of the 50S ribosomal subunit.

Its function is as follows. This protein is one of the early assembly proteins of the 50S ribosomal subunit, although it is not seen to bind rRNA by itself. It is important during the early stages of 50S assembly. This chain is Large ribosomal subunit protein uL13, found in Aeropyrum pernix (strain ATCC 700893 / DSM 11879 / JCM 9820 / NBRC 100138 / K1).